The chain runs to 304 residues: Probable WRKY transcription factor 13 (304 aa).

The tract at residues 141 to 190 is disordered; that stretch reads QKNNHGSEIDVDDNDDEVGDGGGINDDDNGRHHHHDTPSRHDKHNTASLG. The segment covering 149–159 has biased composition (acidic residues); it reads IDVDDNDDEVG. The WRKY DNA-binding region spans 217–282; the sequence is SEVDVLDDGY…YEGRHLHSPS (66 aa).

It belongs to the WRKY group II-c family.

It localises to the nucleus. In terms of biological role, transcription factor. Interacts specifically with the W box (5'-(T)TGAC[CT]-3'), a frequently occurring elicitor-responsive cis-acting element. This Arabidopsis thaliana (Mouse-ear cress) protein is Probable WRKY transcription factor 13 (WRKY13).